A 358-amino-acid chain; its full sequence is Probable undecaprenyl-phosphate N-acetylglucosaminyl 1-phosphate transferase (358 aa).

The next 11 membrane-spanning stretches (helical) occupy residues 10–32 (VVAF…RIAI), 53–72 (MGGL…SGIY), 76–93 (RMTA…LGIL), 105–127 (FLIQ…FFSV), 137–157 (GWMA…AINL), 164–181 (LAAG…VMAL), 186–205 (VLIL…FLFY), 218–235 (GSLF…LGLY), 240–262 (LFSI…FAII), 292–311 (MSVL…AIVL), and 316–338 (IWLS…EVTG).

The protein belongs to the glycosyltransferase 4 family. Mg(2+) is required as a cofactor. Mn(2+) serves as cofactor.

It is found in the cell membrane. It carries out the reaction di-trans,octa-cis-undecaprenyl phosphate + UDP-N-acetyl-alpha-D-glucosamine = N-acetyl-alpha-D-glucosaminyl-di-trans,octa-cis-undecaprenyl diphosphate + UMP. The protein operates within cell wall biogenesis; poly(glucopyranosyl N-acetylgalactosamine 1-phosphate) teichoic acid biosynthesis. It participates in cell wall biogenesis; poly(glycerol phosphate) teichoic acid biosynthesis. Its function is as follows. Catalyzes the formation of undecaprenyl-PP-N-acetylglucosamine. Involved in the synthesis of anionic cell-wall polymers as it mediates the initiation of the linkage unit formation that appears to be common to the two types of teichoic acids attached to the peptidoglycan of B.subtilis; may also be involved in teichuronic acid biosynthesis. This is Probable undecaprenyl-phosphate N-acetylglucosaminyl 1-phosphate transferase (tagO) from Bacillus subtilis (strain 168).